Reading from the N-terminus, the 324-residue chain is Sperm acrosome membrane-associated protein 6 (324 aa).

The N-terminal stretch at 1–26 (MALLALASAVPSALLALAVFRVPAWA) is a signal peptide. Positions 27–30 (CLLC) match the CXXC motif motif. 6 disulfide bridges follow: cysteine 27-cysteine 139, cysteine 30-cysteine 142, cysteine 41-cysteine 55, cysteine 124-cysteine 147, cysteine 128-cysteine 153, and cysteine 170-cysteine 226. Residues 27–295 (CLLCFTTYSE…RPEALTPSNL (269 aa)) lie on the Extracellular side of the membrane. Positions 139–142 (CSGC) match the CXXC motif motif. Residues 150 to 236 (PLDCPVQDVT…VIKQDQRPLA (87 aa)) enclose the Ig-like domain. Asparagine 243 is a glycosylation site (N-linked (GlcNAc...) asparagine). A helical membrane pass occupies residues 296–316 (FLLAVLGALASASATVLAWMF). At 317–324 (FRWYCSGN) the chain is on the cytoplasmic side.

This sequence belongs to the SPACA6 family. In terms of assembly, forms a complex with IZUMO1 and TMEM81 on spermatocyte cell membrane required for fertilization. Detected at the sperm head, equatorial region, neck and midpiece (at protein level). Expressed in testis.

Its subcellular location is the cytoplasmic vesicle. The protein resides in the secretory vesicle. The protein localises to the acrosome membrane. Its function is as follows. Sperm protein required for fusion of sperm with the egg membrane during fertilization. May regulate the expression of sperm surface protein DCST2. This chain is Sperm acrosome membrane-associated protein 6, found in Homo sapiens (Human).